An 89-amino-acid chain; its full sequence is Bombyxin B-1 (89 aa).

Residues 1 to 19 form the signal peptide; that stretch reads MKTSVMFMLVIVISLMCSG. 3 cysteine pairs are disulfide-bonded: C29-C75, C41-C88, and C74-C79. A propeptide spans 48 to 66 (c peptide like); sequence GGAQYAPYFWTRQYLGSRG.

It belongs to the insulin family. Heterodimer of a B chain and an A chain linked by two disulfide bonds.

The protein resides in the secreted. Brain peptide responsible for activation of prothoracic glands to produce ecdysone in insects. This Bombyx mori (Silk moth) protein is Bombyxin B-1 (BBXB1).